Reading from the N-terminus, the 171-residue chain is MNQPRLASGQRNLELTSRVVSAYLSRNIVPAADLASLIQQTYLSLCSTSQADKAEEAAVEEQRPAVPIKKSVTADFIICLEDGKKFKSLKRHLMAKYGLTPQQYREKWGLPADYPMVASSYAQKRSELARALGLGKKRTAPELGSGLVNHSQKMTEAAMQIAEKKVWAHRS.

The protein belongs to the ros/MucR family.

This Sinorhizobium fredii (strain NBRC 101917 / NGR234) protein is Putative MucR family transcriptional regulatory protein y4pD.